A 146-amino-acid polypeptide reads, in one-letter code: Pseudoazurin (146 aa).

Positions 1–23 (MRNIAIKFAAAGILAMLAAPALA) are cleaved as a signal peptide. Residues 28–116 (VHMLNKGAEG…MGMIALIAVG (89 aa)) enclose the Plastocyanin-like domain. Residues His-63, Cys-101, His-104, and Met-109 each coordinate Cu cation.

Requires Cu cation as cofactor.

The protein resides in the periplasm. This soluble electron transfer copper protein is required for the inactivation of copper-containing nitrite reductase in the presence of oxygen. Serves as a direct electron donor to the nitrite reductase. This Alcaligenes faecalis protein is Pseudoazurin.